Here is a 390-residue protein sequence, read N- to C-terminus: Centrosomal protein of 44 kDa (390 aa).

The binds with microtubules and centrioles stretch occupies residues 11–195 (RNLEQVLRLL…ISEDTLSPIT (185 aa)). Residues 233-269 (EITALQTMLAECQENLKKLTSIEKRLDCLEQKMKGKV) adopt a coiled-coil conformation. The disordered stretch occupies residues 322 to 348 (RKSEVERPASIPLSSGYSTASSDSTPR). Serine 331 and serine 345 each carry phosphoserine. The segment covering 335–345 (SSGYSTASSDS) has biased composition (low complexity). At threonine 346 the chain carries Phosphothreonine. The stretch at 361–385 (SEETTIQKMERMKKMFEETAELLKC) forms a coiled coil.

In terms of assembly, interacts with CROCC. Interacts with POC1B; the interaction is direct and recruits POC1B to centriolar microtubules. Binds to centriolar microtubules.

Its subcellular location is the cytoplasm. It is found in the cytoskeleton. The protein resides in the microtubule organizing center. It localises to the centrosome. The protein localises to the centriole. Its subcellular location is the spindle pole. It is found in the midbody. Its function is as follows. Centriole-enriched microtubule-binding protein involved in centriole biogenesis. In collaboration with CEP295 and POC1B, is required for the centriole-to-centrosome conversion by ensuring the formation of bona fide centriole wall. Functions as a linker component that maintains centrosome cohesion. Associates with CROCC and regulates its stability and localization to the centrosome. This chain is Centrosomal protein of 44 kDa (CEP44), found in Homo sapiens (Human).